Reading from the N-terminus, the 1350-residue chain is Tectonin beta-propeller repeat-containing protein (1350 aa).

4 TECPR repeats span residues 23–59 (GAWR…VHVH), 233–271 (LRWT…VRTG), 280–320 (DSWL…FRRG), and 336–371 (KGWV…HRSG). Positions 396 to 415 (SSLSIVSRKSGGSSSTPGSK) are enriched in low complexity. Disordered regions lie at residues 396 to 420 (SSLS…QSFS) and 671 to 691 (SGSG…SGTF). Residues 816-955 (YYNTLYNGMP…RIKLFNVLYR (140 aa)) enclose the Galectin domain. TECPR repeat units follow at residues 966 to 1000 (MHWR…VYNG), 1187 to 1223 (DAWE…FRYG), 1232 to 1269 (DAWQ…VRKE), and 1278 to 1322 (SHWQ…RRCG).

This sequence belongs to the TECPR1 family.

Involved in peroxisome biogenesis. The sequence is that of Tectonin beta-propeller repeat-containing protein (Pex23) from Drosophila melanogaster (Fruit fly).